A 515-amino-acid polypeptide reads, in one-letter code: Fatty acyl-CoA reductase 1 (515 aa).

Residues 1–465 are Cytoplasmic-facing; that stretch reads MVSIPEYYEG…ARKHLNKLRN (465 aa). Positions 451-507 are necessary and sufficient for PEX19-mediated localization into peroxisome membrane; it reads SGLPAARKHLNKLRNIRYGFNTILVILIWRIFIARSQMARNIWYFVVSLCYKFLSYF. A helical membrane pass occupies residues 466–483; sequence IRYGFNTILVILIWRIFI. Over 484 to 515 the chain is Peroxisomal; sequence ARSQMARNIWYFVVSLCYKFLSYFRASSTMRY.

The protein belongs to the fatty acyl-CoA reductase family. As to quaternary structure, interacts with PEX19; PEX19 mediates the targeting of FAR1 to peroxisomes.

It localises to the peroxisome membrane. It catalyses the reaction a long-chain fatty acyl-CoA + 2 NADPH + 2 H(+) = a long-chain primary fatty alcohol + 2 NADP(+) + CoA. The enzyme catalyses hexadecanoyl-CoA + 2 NADPH + 2 H(+) = hexadecan-1-ol + 2 NADP(+) + CoA. The catalysed reaction is octadecanoyl-CoA + 2 NADPH + 2 H(+) = octadecan-1-ol + 2 NADP(+) + CoA. It carries out the reaction (9Z)-octadecenoyl-CoA + 2 NADPH + 2 H(+) = (9Z)-octadecen-1-ol + 2 NADP(+) + CoA. It catalyses the reaction (9Z,12Z)-octadecadienoyl-CoA + 2 NADPH + 2 H(+) = (9Z,12Z)-octadecadien-1-ol + 2 NADP(+) + CoA. The enzyme catalyses eicosanoyl-CoA + 2 NADPH + 2 H(+) = eicosan-1-ol + 2 NADP(+) + CoA. The catalysed reaction is 16-methylheptadecanoyl-CoA + 2 NADPH + 2 H(+) = 16-methylheptadecan-1-ol + 2 NADP(+) + CoA. It carries out the reaction 18-methylnonadecanoyl-CoA + 2 NADPH + 2 H(+) = 18-methylnonadecan-1-ol + 2 NADP(+) + CoA. In terms of biological role, catalyzes the reduction of saturated and unsaturated C16 or C18 fatty acyl-CoA to fatty alcohols. It plays an essential role in the production of ether lipids/plasmalogens which synthesis requires fatty alcohols. In parallel, it is also required for wax monoesters production since fatty alcohols also constitute a substrate for their synthesis. Its function is as follows. Catalyzes the reduction of saturated and unsaturated C16 or C18 fatty acyl-CoA to fatty alcohols. It plays an essential role in the production of ether lipids/plasmalogens which synthesis requires fatty alcohols. In parallel, it is also required for wax monoesters production since fatty alcohols also constitute a substrate for their synthesis. In Rattus norvegicus (Rat), this protein is Fatty acyl-CoA reductase 1.